The sequence spans 85 residues: Small ribosomal subunit protein uS17 (85 aa).

Belongs to the universal ribosomal protein uS17 family. Part of the 30S ribosomal subunit.

One of the primary rRNA binding proteins, it binds specifically to the 5'-end of 16S ribosomal RNA. In Aggregatibacter actinomycetemcomitans (Actinobacillus actinomycetemcomitans), this protein is Small ribosomal subunit protein uS17.